Here is a 705-residue protein sequence, read N- to C-terminus: Elongation factor G 2 (705 aa).

The region spanning 8 to 288 (ERYRNIGISA…AVIDYLPSPA (281 aa)) is the tr-type G domain. Residues 17–24 (AHIDAGKT), 86–90 (DTPGH), and 140–143 (NKMD) each bind GTP.

It belongs to the TRAFAC class translation factor GTPase superfamily. Classic translation factor GTPase family. EF-G/EF-2 subfamily.

The protein resides in the cytoplasm. Catalyzes the GTP-dependent ribosomal translocation step during translation elongation. During this step, the ribosome changes from the pre-translocational (PRE) to the post-translocational (POST) state as the newly formed A-site-bound peptidyl-tRNA and P-site-bound deacylated tRNA move to the P and E sites, respectively. Catalyzes the coordinated movement of the two tRNA molecules, the mRNA and conformational changes in the ribosome. The chain is Elongation factor G 2 from Bordetella parapertussis (strain 12822 / ATCC BAA-587 / NCTC 13253).